We begin with the raw amino-acid sequence, 255 residues long: Small ribosomal subunit protein uS2 (255 aa).

The segment at 231-255 (RLQTGAEEEFSTEGEEVVEETPAEA) is disordered. A compositionally biased stretch (acidic residues) spans 236 to 255 (AEEEFSTEGEEVVEETPAEA).

Belongs to the universal ribosomal protein uS2 family.

The sequence is that of Small ribosomal subunit protein uS2 from Geobacter sp. (strain M21).